The following is a 659-amino-acid chain: Exoribonuclease 2 (659 aa).

Residues 189-531 (RENLTALHFV…NHRLIKAVLA (343 aa)) enclose the RNB domain. One can recognise an S1 motif domain in the interval 576–658 (NAEFEAEVQD…ATRSIVGEIL (83 aa)).

This sequence belongs to the RNR ribonuclease family. RNase II subfamily.

It localises to the cytoplasm. It carries out the reaction Exonucleolytic cleavage in the 3'- to 5'-direction to yield nucleoside 5'-phosphates.. Involved in mRNA degradation. Hydrolyzes single-stranded polyribonucleotides processively in the 3' to 5' direction. The chain is Exoribonuclease 2 from Haemophilus influenzae (strain PittGG).